The primary structure comprises 189 residues: UPF0312 protein VC_A0539 (189 aa).

A signal peptide spans 1–22; the sequence is MKKTLMAVGLAAVMSIPFAANA.

Belongs to the UPF0312 family. Type 1 subfamily.

The protein localises to the periplasm. The protein is UPF0312 protein VC_A0539 of Vibrio cholerae serotype O1 (strain ATCC 39315 / El Tor Inaba N16961).